A 208-amino-acid chain; its full sequence is Granulocyte colony-stimulating factor (208 aa).

Residues 1–30 (MAQLSAQRRMKLMALQLLLWQSALWSGREA) form the signal peptide. Disulfide bonds link Cys-72–Cys-78 and Cys-100–Cys-110. Thr-169 carries O-linked (GalNAc...) threonine glycosylation.

This sequence belongs to the IL-6 superfamily. In terms of assembly, monomer. O-glycosylated.

The protein resides in the secreted. Its function is as follows. Granulocyte/macrophage colony-stimulating factors are cytokines that act in hematopoiesis by controlling the production, differentiation, and function of 2 related white cell populations of the blood, the granulocytes and the monocytes-macrophages. This CSF induces granulocytes. This chain is Granulocyte colony-stimulating factor (Csf3), found in Mus musculus (Mouse).